The following is a 201-amino-acid chain: MSKVLVLKSSILAGYSQSGQLTDYFIEQWREKHVADEITVRDLAANPVPVLDGELVGAMRPGDAPLTPRQQDALALSDELIAELKAHDVIVIAAPMYNFNIPTQLKNYFDLIARAGITFRYTEKGPEGLVTGKRAVVLSSRGGIHKDTPTDLIAPYLKVFLGFIGITDVNFVFAEGIAYGPEVAAKAQADAKAAIDSVVAA.

FMN-binding positions include serine 10, 16-18 (SQS), 96-99 (MYNF), and 140-143 (SRGG).

It belongs to the azoreductase type 1 family. In terms of assembly, homodimer. FMN serves as cofactor.

It carries out the reaction 2 a quinone + NADH + H(+) = 2 a 1,4-benzosemiquinone + NAD(+). The enzyme catalyses N,N-dimethyl-1,4-phenylenediamine + anthranilate + 2 NAD(+) = 2-(4-dimethylaminophenyl)diazenylbenzoate + 2 NADH + 2 H(+). Quinone reductase that provides resistance to thiol-specific stress caused by electrophilic quinones. In terms of biological role, also exhibits azoreductase activity. Catalyzes the reductive cleavage of the azo bond in aromatic azo compounds to the corresponding amines. The chain is FMN-dependent NADH:quinone oxidoreductase from Salmonella paratyphi A (strain ATCC 9150 / SARB42).